The following is a 491-amino-acid chain: Aspartyl/glutamyl-tRNA(Asn/Gln) amidotransferase subunit B (491 aa).

Belongs to the GatB/GatE family. GatB subfamily. As to quaternary structure, heterotrimer of A, B and C subunits.

The enzyme catalyses L-glutamyl-tRNA(Gln) + L-glutamine + ATP + H2O = L-glutaminyl-tRNA(Gln) + L-glutamate + ADP + phosphate + H(+). It catalyses the reaction L-aspartyl-tRNA(Asn) + L-glutamine + ATP + H2O = L-asparaginyl-tRNA(Asn) + L-glutamate + ADP + phosphate + 2 H(+). Its function is as follows. Allows the formation of correctly charged Asn-tRNA(Asn) or Gln-tRNA(Gln) through the transamidation of misacylated Asp-tRNA(Asn) or Glu-tRNA(Gln) in organisms which lack either or both of asparaginyl-tRNA or glutaminyl-tRNA synthetases. The reaction takes place in the presence of glutamine and ATP through an activated phospho-Asp-tRNA(Asn) or phospho-Glu-tRNA(Gln). The chain is Aspartyl/glutamyl-tRNA(Asn/Gln) amidotransferase subunit B from Burkholderia cenocepacia (strain HI2424).